The chain runs to 399 residues: 26S proteasome regulatory subunit 10B homolog A (399 aa).

The residue at position 2 (Thr2) is an N-acetylthreonine. Residue Gly180–Thr187 participates in ATP binding. A Glycyl lysine isopeptide (Lys-Gly) (interchain with G-Cter in ubiquitin) cross-link involves residue Lys203.

It belongs to the AAA ATPase family. Component of the 19S regulatory particle (RP/PA700) base subcomplex of the 26S proteasome. The 26S proteasome is composed of a core protease (CP), known as the 20S proteasome, capped at one or both ends by the 19S regulatory particle (RP/PA700). The RP/PA700 complex is composed of at least 17 different subunits in two subcomplexes, the base and the lid, which form the portions proximal and distal to the 20S proteolytic core, respectively.

The protein resides in the cytoplasm. It localises to the nucleus. Functionally, the 26S proteasome is involved in the ATP-dependent degradation of ubiquitinated proteins. The regulatory (or ATPase) complex confers ATP dependency and substrate specificity to the 26S complex. This chain is 26S proteasome regulatory subunit 10B homolog A (RPT4A), found in Arabidopsis thaliana (Mouse-ear cress).